Consider the following 188-residue polypeptide: Crossover junction endodeoxyribonuclease RuvC (188 aa).

Catalysis depends on residues D14, E74, and D149. D14, E74, and D149 together coordinate Mg(2+).

It belongs to the RuvC family. As to quaternary structure, homodimer which binds Holliday junction (HJ) DNA. The HJ becomes 2-fold symmetrical on binding to RuvC with unstacked arms; it has a different conformation from HJ DNA in complex with RuvA. In the full resolvosome a probable DNA-RuvA(4)-RuvB(12)-RuvC(2) complex forms which resolves the HJ. The cofactor is Mg(2+).

It localises to the cytoplasm. The enzyme catalyses Endonucleolytic cleavage at a junction such as a reciprocal single-stranded crossover between two homologous DNA duplexes (Holliday junction).. Its function is as follows. The RuvA-RuvB-RuvC complex processes Holliday junction (HJ) DNA during genetic recombination and DNA repair. Endonuclease that resolves HJ intermediates. Cleaves cruciform DNA by making single-stranded nicks across the HJ at symmetrical positions within the homologous arms, yielding a 5'-phosphate and a 3'-hydroxyl group; requires a central core of homology in the junction. The consensus cleavage sequence is 5'-(A/T)TT(C/G)-3'. Cleavage occurs on the 3'-side of the TT dinucleotide at the point of strand exchange. HJ branch migration catalyzed by RuvA-RuvB allows RuvC to scan DNA until it finds its consensus sequence, where it cleaves and resolves the cruciform DNA. The polypeptide is Crossover junction endodeoxyribonuclease RuvC (Bacteroides fragilis (strain ATCC 25285 / DSM 2151 / CCUG 4856 / JCM 11019 / LMG 10263 / NCTC 9343 / Onslow / VPI 2553 / EN-2)).